The chain runs to 184 residues: Leucine-rich repeat-containing protein 20 (184 aa).

LRR repeat units follow at residues Gln51–Thr72, Gln75–Leu96, His98–Pro120, Ala121–Ala141, and Ala145–Leu167. Ser175 is modified (phosphoserine).

This is Leucine-rich repeat-containing protein 20 (LRRC20) from Homo sapiens (Human).